Here is a 392-residue protein sequence, read N- to C-terminus: Heavy metal-associated isoprenylated plant protein 6 (392 aa).

Over residues 1–19 the composition is skewed to basic and acidic residues; that stretch reads MGEKKEETATKPQGEKKPT. The segment at 1 to 22 is disordered; the sequence is MGEKKEETATKPQGEKKPTDGG. The HMA 1 domain occupies 23–86; that stretch reads ITTVVMKLDM…KVADKIKRPV (64 aa). The Cd(2+) site is built by cysteine 34 and cysteine 37. The interval 89 to 157 is disordered; the sequence is VSTVAPPKKE…PPPPKESTVV (69 aa). Positions 106-145 are enriched in basic and acidic residues; sequence AEKKPSPAAEEKPAEKKPAAVEKPGEKKEEKKKEEGEKKA. Residues 153-216 enclose the HMA 2 domain; that stretch reads ESTVVLKTKL…YLNEKLKRTV (64 aa). 2 residues coordinate Cd(2+): cysteine 164 and cysteine 167. Residues 258–270 show a composition bias toward basic and acidic residues; sequence KKVDGGGEKKKEV. 2 disordered regions span residues 258-285 and 350-392; these read KKVDGGGEKKKEVAVGGGGGGGGGGGDG and GQGY…CSVM. The span at 272-285 shows a compositional bias: gly residues; it reads VGGGGGGGGGGGDG. Cysteine 389 carries the post-translational modification Cysteine methyl ester. Cysteine 389 carries S-farnesyl cysteine lipidation. Positions 390-392 are cleaved as a propeptide — removed in mature form; sequence SVM.

This sequence belongs to the HIPP family. As to expression, expressed in petioles, hypocotyls, peduncles, vascular bundles and root meristems.

The protein resides in the cell membrane. Heavy-metal-binding protein. Involved in the maintenance of heavy metal homeostasis and/or in detoxification. The polypeptide is Heavy metal-associated isoprenylated plant protein 6 (Arabidopsis thaliana (Mouse-ear cress)).